The following is a 469-amino-acid chain: C4b-binding protein (469 aa).

A signal peptide spans 1 to 56 (MCAKQQQTLLPTRAAHGRLHRNRDAVAWPFSTLCRVSGPTLFQMTFTAALWVAVFG). Sushi domains follow at residues 57–117 (KCGP…SCAK), 118–178 (KHCR…ECVI), 179–242 (VKCG…TCEK), 243–301 (IICS…TCEF), 302–357 (DCDL…QCKA), and 358–415 (LCQK…RCEQ). 12 cysteine pairs are disulfide-bonded: Cys58–Cys103, Cys88–Cys115, Cys120–Cys160, Cys146–Cys176, Cys181–Cys223, Cys209–Cys240, Cys245–Cys287, Cys273–Cys299, Cys303–Cys343, Cys329–Cys355, Cys359–Cys400, and Cys386–Cys413. Asn74 is a glycosylation site (N-linked (GlcNAc...) asparagine). N-linked (GlcNAc...) asparagine glycans are attached at residues Asn227, Asn275, and Asn292. N-linked (GlcNAc...) asparagine glycosylation is found at Asn366 and Asn381. N-linked (GlcNAc...) asparagine glycosylation is present at Asn428.

In terms of assembly, homoheptamer; not covalently linked. Mouse lacks the beta chain of C4BP.

The protein resides in the secreted. In terms of biological role, controls the classical pathway of complement activation. It binds as a cofactor to C3b/C4b inactivator (C3bINA), which then hydrolyzes the complement fragment C4b. It also accelerates the degradation of the C4bC2a complex (C3 convertase) by dissociating the complement fragment C2a. Alpha chain binds C4b. It also interacts with serum amyloid P component. This chain is C4b-binding protein (C4bpa), found in Mus musculus (Mouse).